Reading from the N-terminus, the 365-residue chain is Chorismate synthase (365 aa).

The NADP(+) site is built by Arg48 and Arg54. Residues 131 to 133 (RSS), 243 to 244 (NA), Gly288, 303 to 307 (KPTSS), and Arg329 contribute to the FMN site.

This sequence belongs to the chorismate synthase family. Homotetramer. Requires FMNH2 as cofactor.

The enzyme catalyses 5-O-(1-carboxyvinyl)-3-phosphoshikimate = chorismate + phosphate. It functions in the pathway metabolic intermediate biosynthesis; chorismate biosynthesis; chorismate from D-erythrose 4-phosphate and phosphoenolpyruvate: step 7/7. Functionally, catalyzes the anti-1,4-elimination of the C-3 phosphate and the C-6 proR hydrogen from 5-enolpyruvylshikimate-3-phosphate (EPSP) to yield chorismate, which is the branch point compound that serves as the starting substrate for the three terminal pathways of aromatic amino acid biosynthesis. This reaction introduces a second double bond into the aromatic ring system. The polypeptide is Chorismate synthase (Sinorhizobium fredii (strain NBRC 101917 / NGR234)).